Here is a 235-residue protein sequence, read N- to C-terminus: 7-cyano-7-deazaguanine synthase (235 aa).

ATP is bound at residue 16–26; the sequence is FSGGQDSTTCL. Zn(2+) is bound by residues Cys-195, Cys-204, Cys-207, and Cys-210.

This sequence belongs to the QueC family. It depends on Zn(2+) as a cofactor.

It carries out the reaction 7-carboxy-7-deazaguanine + NH4(+) + ATP = 7-cyano-7-deazaguanine + ADP + phosphate + H2O + H(+). Its pathway is purine metabolism; 7-cyano-7-deazaguanine biosynthesis. Functionally, catalyzes the ATP-dependent conversion of 7-carboxy-7-deazaguanine (CDG) to 7-cyano-7-deazaguanine (preQ(0)). This Shewanella frigidimarina (strain NCIMB 400) protein is 7-cyano-7-deazaguanine synthase.